The primary structure comprises 130 residues: Small ribosomal subunit protein uS9 (130 aa).

It belongs to the universal ribosomal protein uS9 family.

This chain is Small ribosomal subunit protein uS9, found in Polaromonas sp. (strain JS666 / ATCC BAA-500).